The following is a 141-amino-acid chain: Hemoglobin subunit alpha-1/2 (141 aa).

The Globin domain maps to 1–141 (VLSPADKTNV…VSTVLTSKYR (141 aa)). S3 is modified (phosphoserine). K7 carries the post-translational modification N6-succinyllysine. Phosphothreonine is present on T8. K11 bears the N6-succinyllysine mark. N6-acetyllysine; alternate is present on K16. K16 carries the post-translational modification N6-succinyllysine; alternate. The residue at position 24 (Y24) is a Phosphotyrosine. Phosphoserine is present on S35. K40 is modified (N6-succinyllysine). A Phosphoserine modification is found at S49. H58 contributes to the O2 binding site. H87 contacts heme b. A Phosphoserine modification is found at S102. Residue T108 is modified to Phosphothreonine. S124 carries the phosphoserine modification. Phosphothreonine occurs at positions 134 and 137. S138 carries the post-translational modification Phosphoserine.

The protein belongs to the globin family. In terms of assembly, heterotetramer of two alpha chains and two beta chains. Red blood cells.

Involved in oxygen transport from the lung to the various peripheral tissues. The sequence is that of Hemoglobin subunit alpha-1/2 from Mustela putorius (European polecat).